We begin with the raw amino-acid sequence, 261 residues long: Hemin import ATP-binding protein HmuV (261 aa).

Positions 3–243 (LQAQDLSVDR…ANLRRVYGVE (241 aa)) constitute an ABC transporter domain. 35–42 (GANGAGKS) contacts ATP.

This sequence belongs to the ABC transporter superfamily. Heme (hemin) importer (TC 3.A.1.14.5) family. In terms of assembly, the complex is composed of two ATP-binding proteins (HmuV), two transmembrane proteins (HmuU) and a solute-binding protein (HmuT).

The protein localises to the cell inner membrane. Part of the ABC transporter complex HmuTUV involved in hemin import. Responsible for energy coupling to the transport system. The polypeptide is Hemin import ATP-binding protein HmuV (Bordetella avium (strain 197N)).